The following is a 44-amino-acid chain: Large ribosomal subunit protein bL34 (44 aa).

A disordered region spans residues 1–26 (MKMTFQPKKRQRAKVHGFRQRMKTAG). The span at 7–22 (PKKRQRAKVHGFRQRM) shows a compositional bias: basic residues.

Belongs to the bacterial ribosomal protein bL34 family.

This is Large ribosomal subunit protein bL34 from Agathobacter rectalis (strain ATCC 33656 / DSM 3377 / JCM 17463 / KCTC 5835 / VPI 0990) (Eubacterium rectale).